We begin with the raw amino-acid sequence, 290 residues long: ATP synthase gamma chain (290 aa).

It belongs to the ATPase gamma chain family. In terms of assembly, F-type ATPases have 2 components, CF(1) - the catalytic core - and CF(0) - the membrane proton channel. CF(1) has five subunits: alpha(3), beta(3), gamma(1), delta(1), epsilon(1). CF(0) has three main subunits: a, b and c.

The protein localises to the cell membrane. Functionally, produces ATP from ADP in the presence of a proton gradient across the membrane. The gamma chain is believed to be important in regulating ATPase activity and the flow of protons through the CF(0) complex. The sequence is that of ATP synthase gamma chain from Wolbachia pipientis subsp. Culex pipiens (strain wPip).